A 41-amino-acid chain; its full sequence is Photosystem I reaction center subunit IX (41 aa).

Residues 7 to 27 (YLSTAPVVATGWFIVTAALLI) traverse the membrane as a helical segment.

This sequence belongs to the PsaJ family.

The protein resides in the plastid. It is found in the chloroplast thylakoid membrane. In terms of biological role, may help in the organization of the PsaE and PsaF subunits. This is Photosystem I reaction center subunit IX from Tetradesmus obliquus (Green alga).